The chain runs to 820 residues: Quinate repressor protein (820 aa).

A disordered region spans residues 25–79 (SFEQMLLQQDSNESSRRTSPSRTHSRVDLERHSSHIVSLSSSNGSPSLEDPENRL). The segment covering 59 to 71 (HIVSLSSSNGSPS) has biased composition (low complexity).

This sequence in the N-terminal section; belongs to the shikimate kinase family. In the 2nd section; belongs to the type-I 3-dehydroquinase family. It in the C-terminal section; belongs to the shikimate dehydrogenase family. In terms of assembly, interacts with qutA; transcriptional activator of the quinate utilization pathway genes.

Its function is as follows. Multi-domain repressor protein that negatively regulates transcription of the quinate utilization pathway genes. May mediate its repressor activity by binding directly to the qutA activator protein. This Talaromyces stipitatus (strain ATCC 10500 / CBS 375.48 / QM 6759 / NRRL 1006) (Penicillium stipitatum) protein is Quinate repressor protein (qutR).